The sequence spans 912 residues: LPS-assembly protein LptD (912 aa).

Positions 1-27 (MLYSPLYQSIRLILFGALGLSSLTVSA) are cleaved as a signal peptide.

It belongs to the LptD family. Component of the lipopolysaccharide transport and assembly complex. Interacts with LptE and LptA.

It localises to the cell outer membrane. Together with LptE, is involved in the assembly of lipopolysaccharide (LPS) at the surface of the outer membrane. The polypeptide is LPS-assembly protein LptD (Psychrobacter arcticus (strain DSM 17307 / VKM B-2377 / 273-4)).